A 194-amino-acid polypeptide reads, in one-letter code: Probable thymidylate kinase (194 aa).

ATP is bound at residue 8–15 (GIDGSGKT).

Belongs to the thymidylate kinase family.

It catalyses the reaction dTMP + ATP = dTDP + ADP. The chain is Probable thymidylate kinase from Sulfolobus acidocaldarius (strain ATCC 33909 / DSM 639 / JCM 8929 / NBRC 15157 / NCIMB 11770).